Here is a 95-residue protein sequence, read N- to C-terminus: Small ribosomal subunit protein bS6 (95 aa).

It belongs to the bacterial ribosomal protein bS6 family.

Functionally, binds together with bS18 to 16S ribosomal RNA. In Clostridium kluyveri (strain NBRC 12016), this protein is Small ribosomal subunit protein bS6.